A 204-amino-acid polypeptide reads, in one-letter code: tRNA (pseudouridine(54)-N(1))-methyltransferase (204 aa).

Leucine 136 and glycine 158 together coordinate S-adenosyl-L-methionine.

Belongs to the methyltransferase superfamily. TrmY family. As to quaternary structure, homodimer.

It is found in the cytoplasm. It carries out the reaction pseudouridine(54) in tRNA + S-adenosyl-L-methionine = N(1)-methylpseudouridine(54) in tRNA + S-adenosyl-L-homocysteine + H(+). Functionally, specifically catalyzes the N1-methylation of pseudouridine at position 54 (Psi54) in tRNAs. This Pyrococcus abyssi (strain GE5 / Orsay) protein is tRNA (pseudouridine(54)-N(1))-methyltransferase.